Reading from the N-terminus, the 127-residue chain is uncharacterized protein (127 aa).

The first 16 residues, 1-16 (MLKKIIFGITISLTTG), serve as a signal peptide directing secretion. A lipid anchor (N-palmitoyl cysteine) is attached at Cys17. Residue Cys17 is the site of S-diacylglycerol cysteine attachment. The stretch at 56 to 101 (EVREEIQKYRVEIVDINKKKRELYNRLSKEAQSFLAEQQKYKQKLS) forms a coiled coil. The disordered stretch occupies residues 102-127 (IPKLLIENDPKNNTANSKDNNDKDMK).

The protein localises to the cell membrane. This is an uncharacterized protein from Rickettsia prowazekii (strain Madrid E).